Here is a 1188-residue protein sequence, read N- to C-terminus: DNA-directed RNA polymerase subunit beta (1188 aa).

This sequence belongs to the RNA polymerase beta chain family. As to quaternary structure, the RNAP catalytic core consists of 2 alpha, 1 beta, 1 beta' and 1 omega subunit. When a sigma factor is associated with the core the holoenzyme is formed, which can initiate transcription.

It catalyses the reaction RNA(n) + a ribonucleoside 5'-triphosphate = RNA(n+1) + diphosphate. Functionally, DNA-dependent RNA polymerase catalyzes the transcription of DNA into RNA using the four ribonucleoside triphosphates as substrates. The chain is DNA-directed RNA polymerase subunit beta from Streptococcus pyogenes serotype M1.